A 341-amino-acid chain; its full sequence is HTH-type transcriptional repressor PurR (341 aa).

An HTH lacI-type domain is found at 2–56 (ATIKDVAKRAGVSTTTVSHVINKTRFVAEETKAAVRAAIKELHYSPSAVARSLKV). Positions 4-23 (IKDVAKRAGVSTTTVSHVIN) form a DNA-binding region, H-T-H motif. Residues 48 to 56 (SAVARSLKV) mediate DNA binding. The hypoxanthine site is built by Tyr73, Arg190, Thr192, Phe221, and Asp275.

Homodimer.

It functions in the pathway purine metabolism; purine nucleotide biosynthesis [regulation]. Functionally, is the main repressor of the genes involved in the de novo synthesis of purine nucleotides, regulating purB, purC, purEK, purF, purHD, purL, purMN and guaBA expression. PurR is allosterically activated to bind its cognate DNA by binding the purine corepressors, hypoxanthine or guanine, thereby effecting transcription repression. The polypeptide is HTH-type transcriptional repressor PurR (Pectobacterium carotovorum subsp. carotovorum (strain PC1)).